Here is a 78-residue protein sequence, read N- to C-terminus: RNA-binding protein Hfq (78 aa).

One can recognise a Sm domain in the interval 10–69; that stretch reads DPFLNTLRKEHVPVSIYLVNGIKLQGQIESFDQYVVLLRNTVTQMVYKHAISTVVPARAV.

This sequence belongs to the Hfq family. As to quaternary structure, homohexamer.

In terms of biological role, RNA chaperone that binds small regulatory RNA (sRNAs) and mRNAs to facilitate mRNA translational regulation in response to envelope stress, environmental stress and changes in metabolite concentrations. Also binds with high specificity to tRNAs. The chain is RNA-binding protein Hfq from Bordetella petrii (strain ATCC BAA-461 / DSM 12804 / CCUG 43448).